A 293-amino-acid polypeptide reads, in one-letter code: Glutamyl-Q tRNA(Asp) synthetase (293 aa).

Residues 8-12 and Glu-44 each bind L-glutamate; that span reads RFAPT. The short motif at 11–21 is the 'HIGH' region element; sequence PTPSGYLHFGS. Zn(2+) is bound by residues Cys-100, Cys-102, Tyr-114, and Cys-118. The L-glutamate site is built by Tyr-171 and Arg-189. A 'KMSKS' region motif is present at residues 227-231; that stretch reads KLGKS. An ATP-binding site is contributed by Lys-230.

The protein belongs to the class-I aminoacyl-tRNA synthetase family. GluQ subfamily. It depends on Zn(2+) as a cofactor.

In terms of biological role, catalyzes the tRNA-independent activation of glutamate in presence of ATP and the subsequent transfer of glutamate onto a tRNA(Asp). Glutamate is transferred on the 2-amino-5-(4,5-dihydroxy-2-cyclopenten-1-yl) moiety of the queuosine in the wobble position of the QUC anticodon. In Pseudomonas paraeruginosa (strain DSM 24068 / PA7) (Pseudomonas aeruginosa (strain PA7)), this protein is Glutamyl-Q tRNA(Asp) synthetase.